The following is a 43-amino-acid chain: Defensin (43 aa).

3 disulfides stabilise this stretch: C3/C34, C20/C39, and C24/C41.

Its subcellular location is the secreted. Its function is as follows. Antibacterial peptide active against Gram-positive and Gram-negative bacteria. This chain is Defensin, found in Palomena prasina (Green shield bug).